A 358-amino-acid chain; its full sequence is S-adenosylmethionine:tRNA ribosyltransferase-isomerase (358 aa).

Belongs to the QueA family. In terms of assembly, monomer.

It is found in the cytoplasm. The enzyme catalyses 7-aminomethyl-7-carbaguanosine(34) in tRNA + S-adenosyl-L-methionine = epoxyqueuosine(34) in tRNA + adenine + L-methionine + 2 H(+). The protein operates within tRNA modification; tRNA-queuosine biosynthesis. Transfers and isomerizes the ribose moiety from AdoMet to the 7-aminomethyl group of 7-deazaguanine (preQ1-tRNA) to give epoxyqueuosine (oQ-tRNA). The polypeptide is S-adenosylmethionine:tRNA ribosyltransferase-isomerase (Desulfotalea psychrophila (strain LSv54 / DSM 12343)).